The chain runs to 630 residues: Biosynthetic arginine decarboxylase (630 aa).

Lys-99 carries the N6-(pyridoxal phosphate)lysine modification. 279–289 (FDVGGGLGVDY) lines the substrate pocket.

The protein belongs to the Orn/Lys/Arg decarboxylase class-II family. SpeA subfamily. Mg(2+) serves as cofactor. It depends on pyridoxal 5'-phosphate as a cofactor.

The enzyme catalyses L-arginine + H(+) = agmatine + CO2. The protein operates within amine and polyamine biosynthesis; agmatine biosynthesis; agmatine from L-arginine: step 1/1. Catalyzes the biosynthesis of agmatine from arginine. The protein is Biosynthetic arginine decarboxylase of Neisseria meningitidis serogroup B (strain ATCC BAA-335 / MC58).